The primary structure comprises 323 residues: C-type lectin domain family 11 member A (323 aa).

A signal peptide spans 1–21 (MQAAWLLGALVVPQLLGFGHG). Disordered stretches follow at residues 55–106 (LGLP…TPED) and 272–295 (LGAQ…TLEN). A Cell attachment site motif is present at residues 61–63 (RGD). A compositionally biased stretch (acidic residues) spans 74–90 (EDWEMEEDQGEEEEEEA). Residues 183–320 (LGHKCFLLSR…CQRRLYYVCE (138 aa)) form the C-type lectin domain. Cystine bridges form between cysteine 204-cysteine 319 and cysteine 296-cysteine 311.

O-glycosylated. Probably sulfated on the O-glycans. Expressed in skeletal tissues including bone marrow, chondrocytes, primary ossification center-associated cells, the perichondrium and periosteum. Lower levels of expression were detected in spleen, thymus, appendix and fetal liver.

Its subcellular location is the cytoplasm. It localises to the secreted. In terms of biological role, promotes osteogenesis by stimulating the differentiation of mesenchymal progenitors into mature osteoblasts. Important for repair and maintenance of adult bone. In Homo sapiens (Human), this protein is C-type lectin domain family 11 member A (CLEC11A).